Here is a 448-residue protein sequence, read N- to C-terminus: tRNA modification GTPase MnmE (448 aa).

Residues arginine 24, glutamate 81, and lysine 120 each coordinate (6S)-5-formyl-5,6,7,8-tetrahydrofolate. In terms of domain architecture, TrmE-type G spans 216–373 (GLNVVLVGAP…LKRTLLREAG (158 aa)). A K(+)-binding site is contributed by asparagine 226. GTP is bound by residues 226 to 231 (NVGKSS), 245 to 251 (TDIAGTT), and 270 to 273 (DTAG). Residue serine 230 participates in Mg(2+) binding. K(+) is bound by residues threonine 245, isoleucine 247, and threonine 250. Residue threonine 251 participates in Mg(2+) binding. Residue lysine 448 participates in (6S)-5-formyl-5,6,7,8-tetrahydrofolate binding.

It belongs to the TRAFAC class TrmE-Era-EngA-EngB-Septin-like GTPase superfamily. TrmE GTPase family. Homodimer. Heterotetramer of two MnmE and two MnmG subunits. K(+) serves as cofactor.

Its subcellular location is the cytoplasm. Functionally, exhibits a very high intrinsic GTPase hydrolysis rate. Involved in the addition of a carboxymethylaminomethyl (cmnm) group at the wobble position (U34) of certain tRNAs, forming tRNA-cmnm(5)s(2)U34. The sequence is that of tRNA modification GTPase MnmE from Neisseria meningitidis serogroup B (strain ATCC BAA-335 / MC58).